A 118-amino-acid polypeptide reads, in one-letter code: Putative pterin-4-alpha-carbinolamine dehydratase (118 aa).

The protein belongs to the pterin-4-alpha-carbinolamine dehydratase family.

The enzyme catalyses (4aS,6R)-4a-hydroxy-L-erythro-5,6,7,8-tetrahydrobiopterin = (6R)-L-erythro-6,7-dihydrobiopterin + H2O. This Xanthomonas oryzae pv. oryzae (strain PXO99A) protein is Putative pterin-4-alpha-carbinolamine dehydratase.